The chain runs to 188 residues: uncharacterized protein (188 aa).

Helical transmembrane passes span 6-26 (MIVF…SLPL), 43-63 (FAGR…ILFA), and 110-130 (ALFL…MIAA).

Its subcellular location is the membrane. This is an uncharacterized protein from Schizosaccharomyces pombe (strain 972 / ATCC 24843) (Fission yeast).